The chain runs to 469 residues: Adenosylhomocysteinase (469 aa).

Substrate is bound by residues T63, D139, and E164. 165–167 (TTT) provides a ligand contact to NAD(+). Residues K194 and D198 each coordinate substrate. NAD(+) contacts are provided by residues N199, 228-233 (GYGDVG), E251, N300, 321-323 (IGH), and N375.

The protein belongs to the adenosylhomocysteinase family. The cofactor is NAD(+).

Its subcellular location is the cytoplasm. It carries out the reaction S-adenosyl-L-homocysteine + H2O = L-homocysteine + adenosine. The protein operates within amino-acid biosynthesis; L-homocysteine biosynthesis; L-homocysteine from S-adenosyl-L-homocysteine: step 1/1. In terms of biological role, may play a key role in the regulation of the intracellular concentration of adenosylhomocysteine. The polypeptide is Adenosylhomocysteinase (Pseudomonas aeruginosa (strain UCBPP-PA14)).